Consider the following 312-residue polypeptide: MGLFNVTHPAFFLLTGIPGLESSHSWLSGPLCVMYAVALGGNTVILQAVRVEPSLHEPMYYFLSMLSFSDVAISMATLPTVLRTFCLNARNITFDACLIQMFLIHFFSMMESGILLAMSFDRYVAICDPLRYATVLTTEVIAAMGLGAAARSFITLFPLPFLIKRLPICRSNVLSHSYCLHPDMMRLACADISINSIYGLFVLVSTFGMDLFFIFLSYVLILRSVMATASREERLKALNTCVSHILAVLAFYVPMIGVSTVHRFGKHVPCYIHVLMSNVYLFVPPVLNPLIYSAKTKEIRRAIFRMFHHIKI.

Residues methionine 1–serine 25 are Extracellular-facing. N-linked (GlcNAc...) asparagine glycosylation occurs at asparagine 5. The helical transmembrane segment at tryptophan 26–leucine 46 threads the bilayer. Over glutamine 47–serine 54 the chain is Cytoplasmic. The helical transmembrane segment at leucine 55–methionine 75 threads the bilayer. The Extracellular segment spans residues alanine 76–isoleucine 99. Cysteine 97 and cysteine 189 are joined by a disulfide. A helical transmembrane segment spans residues glutamine 100–phenylalanine 120. Over aspartate 121 to glutamate 139 the chain is Cytoplasmic. A helical membrane pass occupies residues valine 140–proline 160. The Extracellular portion of the chain corresponds to phenylalanine 161–serine 196. A helical transmembrane segment spans residues isoleucine 197–serine 217. Over tyrosine 218–alanine 237 the chain is Cytoplasmic. Residues leucine 238–valine 258 form a helical membrane-spanning segment. Over serine 259 to histidine 273 the chain is Extracellular. Residues valine 274–alanine 294 form a helical membrane-spanning segment. Residues lysine 295–isoleucine 312 lie on the Cytoplasmic side of the membrane.

Belongs to the G-protein coupled receptor 1 family.

The protein resides in the cell membrane. In terms of biological role, odorant receptor. This is Olfactory receptor 51I2 (OR51I2) from Homo sapiens (Human).